Consider the following 237-residue polypeptide: 2,3-bisphosphoglycerate-dependent phosphoglycerate mutase (237 aa).

Substrate is bound by residues 8-15, 21-22, Arg-60, 87-90, Lys-98, 114-115, and 180-181; these read RHGQSQWN, TG, ERHY, RR, and GN. His-9 functions as the Tele-phosphohistidine intermediate in the catalytic mechanism. Residue Glu-87 is the Proton donor/acceptor of the active site.

The protein belongs to the phosphoglycerate mutase family. BPG-dependent PGAM subfamily. Homodimer.

The catalysed reaction is (2R)-2-phosphoglycerate = (2R)-3-phosphoglycerate. It functions in the pathway carbohydrate degradation; glycolysis; pyruvate from D-glyceraldehyde 3-phosphate: step 3/5. In terms of biological role, catalyzes the interconversion of 2-phosphoglycerate and 3-phosphoglycerate. The chain is 2,3-bisphosphoglycerate-dependent phosphoglycerate mutase from Caulobacter sp. (strain K31).